The following is a 662-amino-acid chain: DNA ligase (662 aa).

Residues 31 to 35, 79 to 80, and glutamate 119 each bind NAD(+); these read DSEYD and SL. The N6-AMP-lysine intermediate role is filled by lysine 121. The NAD(+) site is built by arginine 142, glutamate 176, lysine 288, and lysine 312. Zn(2+)-binding residues include cysteine 405, cysteine 408, cysteine 421, and cysteine 427. Residues 583–662 form the BRCT domain; sequence NIEKKLDNLT…DELNSFLDNL (80 aa).

The protein belongs to the NAD-dependent DNA ligase family. LigA subfamily. It depends on Mg(2+) as a cofactor. Mn(2+) is required as a cofactor.

The enzyme catalyses NAD(+) + (deoxyribonucleotide)n-3'-hydroxyl + 5'-phospho-(deoxyribonucleotide)m = (deoxyribonucleotide)n+m + AMP + beta-nicotinamide D-nucleotide.. Functionally, DNA ligase that catalyzes the formation of phosphodiester linkages between 5'-phosphoryl and 3'-hydroxyl groups in double-stranded DNA using NAD as a coenzyme and as the energy source for the reaction. It is essential for DNA replication and repair of damaged DNA. This is DNA ligase from Finegoldia magna (strain ATCC 29328 / DSM 20472 / WAL 2508) (Peptostreptococcus magnus).